An 881-amino-acid chain; its full sequence is Receptor-like protein 41 (881 aa).

Positions 1 to 21 are cleaved as a signal peptide; the sequence is MSELLLRLNFLLLLLLSCVSP. The Extracellular segment spans residues 22–844; it reads SSFVTFNNPV…EEQEQVLNWE (823 aa). N58, N70, N91, N109, and N145 each carry an N-linked (GlcNAc...) asparagine glycan. 16 LRR repeats span residues 97 to 121, 122 to 145, 146 to 169, 170 to 195, 197 to 219, 220 to 244, 245 to 267, 268 to 291, 293 to 317, 319 to 340, 342 to 364, 365 to 390, 391 to 412, 413 to 437, 439 to 462, and 463 to 486; these read FHEL…KFGM, LNKL…SFSN, LSML…VRNL, RKLR…LFEL, HLTY…EFGN, LNKL…ISNL, TQLT…VQNL, TKLS…LFTM, FLSY…SSSS, LESL…ISKL, NLKE…LFSS, FKSL…SYIS, LTLE…ILKS, LPNL…LWSL, RLSS…ILVN, and SSVQ…PLSI. Residue N189 is glycosylated (N-linked (GlcNAc...) asparagine). N243 and N266 each carry an N-linked (GlcNAc...) asparagine glycan. 2 N-linked (GlcNAc...) asparagine glycosylation sites follow: N305 and N312. N402 carries an N-linked (GlcNAc...) asparagine glycan. A glycan (N-linked (GlcNAc...) asparagine) is linked at N462. Residues 487-506 form an LRR 17; degenerate repeat; it reads IYFSARYNRFKGDIPLSICN. N506 and N519 each carry an N-linked (GlcNAc...) asparagine glycan. 10 LRR repeats span residues 507–528, 529–552, 554–576, 578–599, 600–624, 627–651, 701–724, 725–748, 749–772, and 774–797; these read RSSL…PPCL, SNLL…YFAD, PLRS…LLNC, ALQF…YLKV, LPKL…NQGS, FPEL…FFVN, TSSA…IGLL, KALI…LANL, VKIE…LGTL, and FLAY…QITG. A glycan (N-linked (GlcNAc...) asparagine) is linked at N575. Residue N731 is glycosylated (N-linked (GlcNAc...) asparagine). Residue N779 is glycosylated (N-linked (GlcNAc...) asparagine). The chain crosses the membrane as a helical span at residues 845–865; it reads GVAIGYGVGVLLGLAIAQLIA. Topologically, residues 866-881 are cytoplasmic; it reads SYKPEWLACLIKSRNR.

Belongs to the RLP family.

Its subcellular location is the cell membrane. May be involved in ABA-induced senescence responses. The sequence is that of Receptor-like protein 41 from Arabidopsis thaliana (Mouse-ear cress).